Consider the following 644-residue polypeptide: Exoribonuclease 2 (644 aa).

The RNB domain maps to 189-516 (RRDLTALNFV…NHRLLKAIVK (328 aa)). In terms of domain architecture, S1 motif spans 561 to 643 (DTRFAAEIID…ETRSIIARPV (83 aa)).

This sequence belongs to the RNR ribonuclease family. RNase II subfamily.

Its subcellular location is the cytoplasm. It carries out the reaction Exonucleolytic cleavage in the 3'- to 5'-direction to yield nucleoside 5'-phosphates.. Functionally, involved in mRNA degradation. Hydrolyzes single-stranded polyribonucleotides processively in the 3' to 5' direction. This is Exoribonuclease 2 from Enterobacter sp. (strain 638).